A 171-amino-acid polypeptide reads, in one-letter code: Tubulin polymerization-promoting protein family member 2 (171 aa).

Positions 120-171 (LTDTSKYTGTHKERFDESGKGKGIAGREDVTDNSGYVSGYKGAGTYDKKGSN) are disordered. Residues 129-149 (THKERFDESGKGKGIAGREDV) are compositionally biased toward basic and acidic residues.

This sequence belongs to the TPPP family.

Its subcellular location is the cytoplasm. The protein localises to the cytosol. It is found in the cell projection. The protein resides in the cilium. It localises to the flagellum. In terms of biological role, probable regulator of microtubule dynamics required for sperm motility. In contrast to other members of the family, has no microtubule bundling activity. The protein is Tubulin polymerization-promoting protein family member 2 of Bos taurus (Bovine).